A 701-amino-acid chain; its full sequence is Triadin (701 aa).

Positions 1 to 28 are disordered; it reads MTEITAEGNASTTTTVIDSKNGSVPKSP. Residues 1–47 lie on the Cytoplasmic side of the membrane; sequence MTEITAEGNASTTTTVIDSKNGSVPKSPGKVLKRTVTEDIVTTFSSP. Positions 8 to 24 are enriched in polar residues; it reads GNASTTTTVIDSKNGSV. Residues 48–68 form a helical membrane-spanning segment; the sequence is AAWLLVIALIITWSAVAVVMF. Topologically, residues 69 to 701 are lumenal; that stretch reads DLVDYKNFSA…SSPGQKQQGQ (633 aa). An N-linked (GlcNAc...) asparagine glycan is attached at Asn75. The segment covering 117–130 has biased composition (acidic residues); that stretch reads DGDEDDDDGDEDTD. 3 disordered regions span residues 117-256, 273-654, and 676-701; these read DGDE…KHEQ, GDLR…TKRQ, and FPVTPAYRPGESSGQPSSPGQKQQGQ. Composition is skewed to basic and acidic residues over residues 131-256, 303-351, 365-385, 391-426, 437-485, and 492-643; these read KGEI…KHEQ, EGKE…KAPE, AKKDEKKEDSKKTKTPVEEHP, EKKEKYVEPAKSSKKEHSAPSEKQVKAKTERAKEET, GKKE…EVKP, and VKKE…KAKE. Asn617 is a glycosylation site (N-linked (GlcNAc...) asparagine). Low complexity predominate over residues 684–701; sequence PGESSGQPSSPGQKQQGQ.

Homooligomer of variable subunit number; disulfide-linked. Interacts with CASQ1 and RYR1 in skeletal muscle. Interacts with CASQ2. In terms of processing, phosphorylated by CaMK2. Post-translationally, N-glycosylated. As to expression, detected in heart (at protein level). Skeletal and cardiac muscle.

It localises to the sarcoplasmic reticulum membrane. Functionally, contributes to the regulation of lumenal Ca2+ release via the sarcoplasmic reticulum calcium release channels RYR1 and RYR2, a key step in triggering skeletal and heart muscle contraction. Required for normal organization of the triad junction, where T-tubules and the sarcoplasmic reticulum terminal cisternae are in close contact. Required for normal skeletal muscle strength. Plays a role in excitation-contraction coupling in the heart and in regulating the rate of heart beats. This chain is Triadin (TRDN), found in Canis lupus familiaris (Dog).